Reading from the N-terminus, the 408-residue chain is MQIYKVGGAVRDRLLGQPVTDIDWVVVGASTEDMLIKGYRPVGTDFPVFLHPLTNEEYALARTERKSGVGYGGFVFHASPEVTLEQDLIRRDLTINAMAEDKDGNLTDPYNGQKDLQARILRHVSPAFAEDPLRVLRVARFAARYAGYGFTIAPETLGLMRQLSASGELKALTAERSWKEISRALMEEQPQVFIQVLHDCGALKELMPEVEALFGVPQPAAHHPEIDTGVHVLSVLEQSARHKHPLTVRWACLLHDLGKGLTPEAEWPRHIAHEHTGLRLIKAVNERFRVPRDCQELALLVGQYHTHGHRALELKPSTLLELLQSFDVYRRPQRFEEFIAACEMDARGRHGFEQRSYPQADYLRGAAEAARAVSVQPLLEQGLKGKELGDALKNERLKALKTYKTSTV.

ATP-binding residues include Gly-8 and Arg-11. CTP is bound by residues Gly-8 and Arg-11. Asp-21 and Asp-23 together coordinate Mg(2+). ATP contacts are provided by Arg-91, Arg-137, and Arg-140. CTP contacts are provided by Arg-91, Arg-137, and Arg-140. The HD domain occupies 228–329 (TGVHVLSVLE…LELLQSFDVY (102 aa)).

Belongs to the tRNA nucleotidyltransferase/poly(A) polymerase family. Bacterial CCA-adding enzyme type 1 subfamily. As to quaternary structure, monomer. Can also form homodimers and oligomers. Requires Mg(2+) as cofactor. Ni(2+) serves as cofactor.

It catalyses the reaction a tRNA precursor + 2 CTP + ATP = a tRNA with a 3' CCA end + 3 diphosphate. The catalysed reaction is a tRNA with a 3' CCA end + 2 CTP + ATP = a tRNA with a 3' CCACCA end + 3 diphosphate. In terms of biological role, catalyzes the addition and repair of the essential 3'-terminal CCA sequence in tRNAs without using a nucleic acid template. Adds these three nucleotides in the order of C, C, and A to the tRNA nucleotide-73, using CTP and ATP as substrates and producing inorganic pyrophosphate. tRNA 3'-terminal CCA addition is required both for tRNA processing and repair. Also involved in tRNA surveillance by mediating tandem CCA addition to generate a CCACCA at the 3' terminus of unstable tRNAs. While stable tRNAs receive only 3'-terminal CCA, unstable tRNAs are marked with CCACCA and rapidly degraded. This Pseudomonas syringae pv. syringae (strain B728a) protein is Multifunctional CCA protein.